The primary structure comprises 300 residues: Ribonuclease HIII (300 aa).

An RNase H type-2 domain is found at 86–300; sequence RPRLGVDESG…FNEICDSASA (215 aa). Residues Asp92, Glu93, and Asp196 each contribute to the a divalent metal cation site.

This sequence belongs to the RNase HII family. RnhC subfamily. It depends on Mn(2+) as a cofactor. Requires Mg(2+) as cofactor.

The protein localises to the cytoplasm. It carries out the reaction Endonucleolytic cleavage to 5'-phosphomonoester.. Functionally, endonuclease that specifically degrades the RNA of RNA-DNA hybrids. This Chlamydia felis (strain Fe/C-56) (Chlamydophila felis) protein is Ribonuclease HIII.